Here is a 383-residue protein sequence, read N- to C-terminus: Teichoic acid glycerol-phosphate primase (383 aa).

It belongs to the CDP-glycerol glycerophosphotransferase family.

The protein resides in the cell membrane. The catalysed reaction is N-acetyl-beta-D-mannosaminyl-(1-&gt;4)-N-acetyl-alpha-D-glucosaminyl di-trans,octa-cis-undecaprenyl diphosphate + CDP-glycerol = 4-O-[(2R)-glycerylphospho]-N-acetyl-beta-D-mannosaminyl-(1-&gt;4)-N-acetyl-alpha-D-glucosaminyl di-trans,octa-cis-undecaprenyl diphosphate + CMP + H(+). It participates in cell wall biogenesis; poly(ribitol phosphate) teichoic acid biosynthesis. Catalyzes the addition of a single glycerol phosphate residue to the prenoldiphosphate-linked disaccharide. The protein is Teichoic acid glycerol-phosphate primase (tarB) of Bacillus spizizenii (strain ATCC 23059 / NRRL B-14472 / W23) (Bacillus subtilis subsp. spizizenii).